Here is a 239-residue protein sequence, read N- to C-terminus: Ribitol-5-phosphate cytidylyltransferase (239 aa).

Residues 7 to 10 (FAGG) and 80 to 86 (GETGQMS) contribute to the CTP site.

The protein belongs to the IspD/TarI cytidylyltransferase family. TarI subfamily.

The catalysed reaction is D-ribitol 5-phosphate + CTP + H(+) = CDP-L-ribitol + diphosphate. The protein operates within cell wall biogenesis; poly(ribitol phosphate) teichoic acid biosynthesis. In terms of biological role, catalyzes the transfer of the cytidylyl group of CTP to D-ribitol 5-phosphate. The sequence is that of Ribitol-5-phosphate cytidylyltransferase from Streptococcus agalactiae serotype Ia (strain ATCC 27591 / A909 / CDC SS700).